Consider the following 559-residue polypeptide: MEFDYIIIGAGSAGNVLATRLTEDSDVTVLLLEAGGPDYRFDFRTQMPAALAYPLQGKRYNWAYETEPEPYMNNRRMECGRGKGLGGSSLINGMCYIRGNAMDLDNWAQQPGLERWTYLDCLPYYRKSETRDIGANDYHGGDGPVSITTCKPGNNPLFAAMIEAGVQAGYPRTDDLNGYQQEGFGPMDRFVTPKGRRSSTARGYLDTAKQRPNLKIITHATTDRILFENKRAVGVAYLHGASNTPQEVHARREVLLCAGAIASPQILQRSGVGNAELLKQFDIPVVHDLPGVGENLQDHLEMYLQYECKEPVSLYPALKWWNQPKIGAEWLFNGTGIGASNHFEGGGFIRSREEFAWPNIQYHFLPVAINYNGSNAVEAHGFQCHVGSMRSPSRGHVRIKSRDPHQHPAILFNYMSHEQDWQEFRDAIRITRQIINQPALDKFRGREISPGIDCQTDEQLDEFVRNHAETAYHPCGTCKMGSDEMAVVDDEGRVHGLEGLRVVDASIMPLIITGNLNATTIMIGEKIADNIRGRTPLPRSTASYFVAGDRPVRGEPLRP.

4–33 contributes to the FAD binding site; sequence DYIIIGAGSAGNVLATRLTEDSDVTVLLLE. His-473 (proton acceptor) is an active-site residue.

Belongs to the GMC oxidoreductase family. Requires FAD as cofactor.

The enzyme catalyses choline + A = betaine aldehyde + AH2. It carries out the reaction betaine aldehyde + NAD(+) + H2O = glycine betaine + NADH + 2 H(+). Its pathway is amine and polyamine biosynthesis; betaine biosynthesis via choline pathway; betaine aldehyde from choline (cytochrome c reductase route): step 1/1. Functionally, involved in the biosynthesis of the osmoprotectant glycine betaine. Catalyzes the oxidation of choline to betaine aldehyde and betaine aldehyde to glycine betaine at the same rate. In Cronobacter sakazakii (strain ATCC BAA-894) (Enterobacter sakazakii), this protein is Oxygen-dependent choline dehydrogenase.